The sequence spans 888 residues: 3-hydroxy-3-methylglutaryl-coenzyme A reductase (888 aa).

Over 1–9 (MLSRLFRMH) the chain is Cytoplasmic. The chain crosses the membrane as a helical span at residues 10 to 39 (GLFVASHPWEVIVGTVTLTICMMSMNMFTG). Topologically, residues 40 to 56 (NDKICGWNYECPKFEED) are lumenal. A helical transmembrane segment spans residues 57–78 (VLSSDIIILTITRCIAILYIYF). Residues 61–218 (DIIILTITRC…MTFFPACVSL (158 aa)) form the SSD domain. The INSIG-binding motif motif lies at 75–78 (YIYF). Residues 79–89 (QFQNLRQLGSK) lie on the Cytoplasmic side of the membrane. Lys89 is covalently cross-linked (Glycyl lysine isopeptide (Lys-Gly) (interchain with G-Cter in ubiquitin)). The helical transmembrane segment at 90–114 (YILGIAGLFTIFSSFVFSTVVIHFL) threads the bilayer. At 115-123 (DKELTGLNE) the chain is on the lumenal side. Residues 124 to 149 (ALPFFLLLIDLSRASALAKFALSSNS) form a helical membrane-spanning segment. Topologically, residues 150-159 (QDEVRENIAR) are cytoplasmic. A helical transmembrane segment spans residues 160–187 (GMAILGPTFTLDALVECLVIGVGTMSGV). Residues 188–191 (RQLE) are Lumenal-facing. Residues 192–220 (IMCCFGCMSVLANYFVFMTFFPACVSLVL) form a helical membrane-spanning segment. Topologically, residues 221 to 248 (ELSRESREGRPIWQLSHFARVLEEEENK) are cytoplasmic. A Glycyl lysine isopeptide (Lys-Gly) (interchain with G-Cter in ubiquitin) cross-link involves residue Lys248. Residues 249 to 275 (PNPVTQRVKMIMSLGLVLVHAHSRWIA) form a helical membrane-spanning segment. Over 276 to 314 (DPSPQNSTADNSKVSLGLDENVSKRIEPSVSLWQFYLSK) the chain is Lumenal. N-linked (GlcNAc...) asparagine glycosylation is found at Asn281 and Asn296. The helical transmembrane segment at 315–339 (MISMDIEQVITLSLALLLAVKYIFF) threads the bilayer. At 340–888 (EQAETESTLS…LEGACTKKAA (549 aa)) the chain is on the cytoplasmic side. Active-site charge relay system residues include Glu559, Lys691, and Asp767. Catalysis depends on His866, which acts as the Proton donor. Phosphoserine; by AMPK is present on Ser872.

This sequence belongs to the HMG-CoA reductase family. In terms of assembly, homotetramer. Homodimer. Interacts (via its SSD) with INSIG1; the interaction, accelerated by sterols, leads to the recruitment of HMGCR to AMFR/gp78 for its ubiquitination by the sterol-mediated ERAD pathway. Interacts with UBIAD1. Post-translationally, undergoes sterol-mediated ubiquitination and ER-associated degradation (ERAD). Accumulation of sterols in the endoplasmic reticulum (ER) membrane, triggers binding of the reductase to the ER membrane protein INSIG1 or INSIG2. The INSIG1 binding leads to the recruitment of the ubiquitin ligase, AMFR/gp78, RNF139 or RNF145, initiating ubiquitination of the reductase. The ubiquitinated reductase is then extracted from the ER membrane and delivered to cytosolic 26S proteosomes by a mechanism probably mediated by the ATPase Valosin-containing protein VCP/p97. The INSIG2-binding leads to the recruitment of the ubiquitin ligase RNF139, initiating ubiquitination of the reductase. Lys-248 is the main site of ubiquitination. Ubiquitination is enhanced by the presence of a geranylgeranylated protein. N-glycosylated. Deglycosylated by NGLY1 on release from the endoplasmic reticulum (ER) in a sterol-mediated manner. In terms of processing, phosphorylated. Phosphorylation at Ser-872 reduces the catalytic activity.

It is found in the endoplasmic reticulum membrane. Its subcellular location is the peroxisome membrane. The catalysed reaction is (R)-mevalonate + 2 NADP(+) + CoA = (3S)-3-hydroxy-3-methylglutaryl-CoA + 2 NADPH + 2 H(+). The protein operates within metabolic intermediate biosynthesis; (R)-mevalonate biosynthesis; (R)-mevalonate from acetyl-CoA: step 3/3. Regulated by a negative feedback mechanism through sterols and non-sterol metabolites derived from mevalonate. Phosphorylation at Ser-872 down-regulates the catalytic activity. Its function is as follows. Catalyzes the conversion of (3S)-hydroxy-3-methylglutaryl-CoA (HMG-CoA) to mevalonic acid, the rate-limiting step in the synthesis of cholesterol and other isoprenoids, thus plays a critical role in cellular cholesterol homeostasis. The chain is 3-hydroxy-3-methylglutaryl-coenzyme A reductase (HMGCR) from Oryctolagus cuniculus (Rabbit).